The sequence spans 360 residues: 3-dehydroquinate synthase (360 aa).

Residues 70-75 (DGESLK), 128-129 (TT), Lys-141, and Lys-150 contribute to the NAD(+) site. Zn(2+)-binding residues include Glu-182, His-243, and His-259.

It belongs to the sugar phosphate cyclases superfamily. Dehydroquinate synthase family. The cofactor is NAD(+). It depends on Co(2+) as a cofactor. Zn(2+) is required as a cofactor.

The protein localises to the cytoplasm. The catalysed reaction is 7-phospho-2-dehydro-3-deoxy-D-arabino-heptonate = 3-dehydroquinate + phosphate. It participates in metabolic intermediate biosynthesis; chorismate biosynthesis; chorismate from D-erythrose 4-phosphate and phosphoenolpyruvate: step 2/7. Functionally, catalyzes the conversion of 3-deoxy-D-arabino-heptulosonate 7-phosphate (DAHP) to dehydroquinate (DHQ). This is 3-dehydroquinate synthase from Thermoplasma volcanium (strain ATCC 51530 / DSM 4299 / JCM 9571 / NBRC 15438 / GSS1).